The following is a 322-amino-acid chain: Probable L-asparaginase (322 aa).

The region spanning 6–320 is the Asparaginase/glutaminase domain; it reads PRLALIHTGG…EDIRRVFTQG (315 aa). Residues 13 to 37 form a disordered region; sequence TGGTIASRPSPDGRGLTPQTPPALP. The active-site O-isoaspartyl threonine intermediate is Thr-16. Substrate is bound by residues Ser-54 and 85-86; that span reads TD.

The protein belongs to the asparaginase 1 family.

It localises to the cytoplasm. The enzyme catalyses L-asparagine + H2O = L-aspartate + NH4(+). This is Probable L-asparaginase (ansA) from Deinococcus radiodurans (strain ATCC 13939 / DSM 20539 / JCM 16871 / CCUG 27074 / LMG 4051 / NBRC 15346 / NCIMB 9279 / VKM B-1422 / R1).